The following is a 678-amino-acid chain: UvrABC system protein B (678 aa).

In terms of domain architecture, Helicase ATP-binding spans glutamate 26–aspartate 185. Glycine 39–threonine 46 contacts ATP. The Beta-hairpin motif lies at tyrosine 92 to valine 115. Positions glutamine 430–leucine 596 constitute a Helicase C-terminal domain. The interval glutamate 597 to threonine 630 is disordered. Positions alanine 635–serine 670 constitute a UVR domain.

It belongs to the UvrB family. As to quaternary structure, forms a heterotetramer with UvrA during the search for lesions. Interacts with UvrC in an incision complex.

The protein localises to the cytoplasm. In terms of biological role, the UvrABC repair system catalyzes the recognition and processing of DNA lesions. A damage recognition complex composed of 2 UvrA and 2 UvrB subunits scans DNA for abnormalities. Upon binding of the UvrA(2)B(2) complex to a putative damaged site, the DNA wraps around one UvrB monomer. DNA wrap is dependent on ATP binding by UvrB and probably causes local melting of the DNA helix, facilitating insertion of UvrB beta-hairpin between the DNA strands. Then UvrB probes one DNA strand for the presence of a lesion. If a lesion is found the UvrA subunits dissociate and the UvrB-DNA preincision complex is formed. This complex is subsequently bound by UvrC and the second UvrB is released. If no lesion is found, the DNA wraps around the other UvrB subunit that will check the other stand for damage. The sequence is that of UvrABC system protein B from Hydrogenovibrio crunogenus (strain DSM 25203 / XCL-2) (Thiomicrospira crunogena).